A 722-amino-acid chain; its full sequence is Ribosomal RNA large subunit methyltransferase K/L (722 aa).

One can recognise a THUMP domain in the interval 55 to 167 (TGYRACLWSR…GNEGTLYLDL (113 aa)).

Belongs to the methyltransferase superfamily. RlmKL family.

It is found in the cytoplasm. The catalysed reaction is guanosine(2445) in 23S rRNA + S-adenosyl-L-methionine = N(2)-methylguanosine(2445) in 23S rRNA + S-adenosyl-L-homocysteine + H(+). It catalyses the reaction guanosine(2069) in 23S rRNA + S-adenosyl-L-methionine = N(2)-methylguanosine(2069) in 23S rRNA + S-adenosyl-L-homocysteine + H(+). In terms of biological role, specifically methylates the guanine in position 2445 (m2G2445) and the guanine in position 2069 (m7G2069) of 23S rRNA. In Desulfotalea psychrophila (strain LSv54 / DSM 12343), this protein is Ribosomal RNA large subunit methyltransferase K/L.